A 206-amino-acid polypeptide reads, in one-letter code: Shieldin complex subunit 1 (206 aa).

The interval 27-94 (SSYEASQRVS…GQLETNEEED (68 aa)) is disordered. The span at 32 to 55 (SQRVSQGSSNSLSSLESHPFLSSS) shows a compositional bias: low complexity. A compositionally biased stretch (polar residues) spans 56 to 74 (TTDPDSNSLNTEQKGSWDS).

As to quaternary structure, component of the shieldin complex, consisting of SHLD1, SHLD2, SHLD3 and MAD2L2/REV7. Within the complex, SHLD2 forms a scaffold which interacts with a SHLD3-MAD2L2 subcomplex via its N-terminus, and with SHLD1 via its C-terminus. Interacts with ASTE1.

The protein localises to the chromosome. In terms of biological role, component of the shieldin complex, which plays an important role in repair of DNA double-stranded breaks (DSBs). During G1 and S phase of the cell cycle, the complex functions downstream of TP53BP1 to promote non-homologous end joining (NHEJ) and suppress DNA end resection. Mediates various NHEJ-dependent processes including immunoglobulin class-switch recombination, and fusion of unprotected telomeres. The chain is Shieldin complex subunit 1 from Mus musculus (Mouse).